The chain runs to 545 residues: Toxin BC_0920 (545 aa).

Residues 1–217 form the LXG domain; the sequence is MSLNMYLGEV…ARQAANSIEE (217 aa).

This sequence in the N-terminal section; belongs to the LXG family. In the C-terminal section; belongs to the bacterial EndoU family. As to quaternary structure, probably interacts with cognate immunity protein BC_0921. The interaction inhibits the toxic activity of BC_0921.

Its subcellular location is the secreted. Functionally, toxic component of an LXG toxin-immunity module. The C-terminus (residues 322-545) has RNase activity in E.coli which is neutralized by cognate immunity protein BC_0921, but not by immunity proteins specific to other toxins with the LXG domain. Degrades 5S rRNA and several tRNAs in vitro; cleavage is endonucleolytic within the anticodon loop for tRNA(GAU-Ile) and tRNA(UUC-Glu) but total for 5S rRNA and at least one other tRNA. RNase activity is suppressed by cognate immunity protein BC_0921. The chain is Toxin BC_0920 from Bacillus cereus (strain ATCC 14579 / DSM 31 / CCUG 7414 / JCM 2152 / NBRC 15305 / NCIMB 9373 / NCTC 2599 / NRRL B-3711).